Here is a 316-residue protein sequence, read N- to C-terminus: tRNA pseudouridine synthase B (316 aa).

The active-site Nucleophile is the D47.

This sequence belongs to the pseudouridine synthase TruB family. Type 1 subfamily.

It carries out the reaction uridine(55) in tRNA = pseudouridine(55) in tRNA. Responsible for synthesis of pseudouridine from uracil-55 in the psi GC loop of transfer RNAs. This chain is tRNA pseudouridine synthase B, found in Photobacterium profundum (strain SS9).